The sequence spans 213 residues: mRNA-decapping protein OPG121 (213 aa).

Positions 16 and 50 each coordinate N(7)-methyl-GTP. A Nudix hydrolase domain is found at 30-209 (KDTHVFAACI…EYLSYIYNIL (180 aa)). The short motif at 111 to 132 (GKLDKKESIKDCLRRELKEESD) is the Nudix box element. Positions 126 and 130 each coordinate Mg(2+). Asp151 lines the N(7)-methyl-GTP pocket. A Mg(2+)-binding site is contributed by Glu183.

The protein belongs to the Nudix hydrolase family. As to quaternary structure, interacts with the late transcription elongation factor VLTF-4/OPG110. Interacts with the late transcription factors VLTF-1. The cofactor is Mg(2+). Mn(2+) is required as a cofactor.

It catalyses the reaction a 5'-end (N(7)-methyl 5'-triphosphoguanosine)-guanosine in mRNA + H2O = a 5'-end phospho-guanosine in mRNA + N(7)-methyl-GDP + 2 H(+). Functionally, acts with RNA polymerase to initiate transcription from late gene promoters. This Cynomys gunnisoni (Gunnison's prairie dog) protein is mRNA-decapping protein OPG121 (OPG121).